A 280-amino-acid chain; its full sequence is Aquaporin PIP2-7 (280 aa).

The residue at position 1 (Met1) is an N-acetylmethionine. Residues 1–38 lie on the Cytoplasmic side of the membrane; that stretch reads MSKEVSEEGKTHHGKDYVDPPPAPLLDMGELKSWSFYR. Lys3 is subject to N6,N6-dimethyllysine. Residues 39–59 form a helical membrane-spanning segment; sequence ALIAEFIATLLFLYVTVATVI. At 60-69 the chain is on the extracellular side; it reads GHKKQTGPCD. The helical transmembrane segment at 70 to 90 threads the bilayer; that stretch reads GVGLLGIAWAFGGMIFVLVYC. The Cytoplasmic portion of the chain corresponds to 91–118; that stretch reads TAGISGGHINPAVTFGLFLARKVSLVRA. The NPA 1 signature appears at 100–102; sequence NPA. The chain crosses the membrane as a helical span at residues 119-139; sequence LGYMIAQCLGAICGVGFVKAF. Topologically, residues 140–160 are extracellular; sequence MKTPYNTLGGGANTVADGYSK. A helical transmembrane segment spans residues 161–181; that stretch reads GTALGAEIIGTFVLVYTVFSA. Topologically, residues 182-192 are cytoplasmic; the sequence is TDPKRSARDSH. A helical membrane pass occupies residues 193–213; it reads IPVLAPLPIGFAVFMVHLATI. Residues 214–242 lie on the Extracellular side of the membrane; the sequence is PITGTGINPARSFGAAVIYNNEKAWDDQW. An NPA 2 motif is present at residues 221–223; sequence NPA. The chain crosses the membrane as a helical span at residues 243–263; sequence IFWVGPFLGALAAAAYHQYIL. Residues 264–280 lie on the Cytoplasmic side of the membrane; sequence RASAIKALGSFRSNATN. Ser273 and Ser276 each carry phosphoserine. Thr279 is subject to Phosphothreonine.

The protein belongs to the MIP/aquaporin (TC 1.A.8) family. PIP (TC 1.A.8.11) subfamily. As to quaternary structure, interacts with SYP61 and SYP121 in trafficking vesicles and at the plasma membrane. Highly expressed in flowers, expressed at low levels in siliques, and at low level in leaves and roots. Highly levels in elongating cells in both roots and shoots.

It is found in the cell membrane. Water channel required to facilitate the transport of water across cell membrane. May be involved in the osmoregulation in plants under high osmotic stress such as under a high salt condition. This Arabidopsis thaliana (Mouse-ear cress) protein is Aquaporin PIP2-7.